The following is a 351-amino-acid chain: Phosphoribosylformylglycinamidine cyclo-ligase (351 aa).

This sequence belongs to the AIR synthase family.

It is found in the cytoplasm. It catalyses the reaction 2-formamido-N(1)-(5-O-phospho-beta-D-ribosyl)acetamidine + ATP = 5-amino-1-(5-phospho-beta-D-ribosyl)imidazole + ADP + phosphate + H(+). The protein operates within purine metabolism; IMP biosynthesis via de novo pathway; 5-amino-1-(5-phospho-D-ribosyl)imidazole from N(2)-formyl-N(1)-(5-phospho-D-ribosyl)glycinamide: step 2/2. The chain is Phosphoribosylformylglycinamidine cyclo-ligase from Azotobacter vinelandii (strain DJ / ATCC BAA-1303).